A 1033-amino-acid polypeptide reads, in one-letter code: Calcium-transporting ATPase 3, plasma membrane-type (1033 aa).

The Cytoplasmic segment spans residues 1 to 180 (MHSGVNGCCP…FVWEALEDTT (180 aa)). Transmembrane regions (helical) follow at residues 181-201 (LIIL…TEGW) and 204-224 (GAHD…VTGT). Residues 225-268 (SNYQQSLQFRDLDKEKRKILVQVTRNGLRQRVLIDDLLPGDAVH) are Cytoplasmic-facing. The next 2 membrane-spanning stretches (helical) occupy residues 269–289 (LAVG…SVLV) and 362–382 (IGKI…QGII). Residues 383-405 (GQKYLDGLLLSWSGDDVLEILDH) are Cytoplasmic-facing. A helical membrane pass occupies residues 406-426 (FAVAVTIVVVAVPEGLPLAVT). The active-site 4-aspartylphosphate intermediate is the Asp461. Mg(2+) is bound by residues Asp762 and Asp766. A helical transmembrane segment spans residues 823 to 843 (FQLTVNVVALLVNFTSACFTG). Residues 844–846 (DAP) are Cytoplasmic-facing. 2 consecutive transmembrane segments (helical) span residues 847–867 (LTAV…ALAL) and 928–948 (IVLN…NEIS). Over 949-965 (SREMEDINVLRGMAGNS) the chain is Cytoplasmic. Transmembrane regions (helical) follow at residues 966 to 986 (IFLG…QFLG) and 999 to 1019 (WLIS…IKLI). At 1020–1033 (AVEPHEKADTRRTP) the chain is on the cytoplasmic side.

Belongs to the cation transport ATPase (P-type) (TC 3.A.3) family. Type IIB subfamily.

It localises to the membrane. It carries out the reaction Ca(2+)(in) + ATP + H2O = Ca(2+)(out) + ADP + phosphate + H(+). Activated by calmodulin. This magnesium-dependent enzyme catalyzes the hydrolysis of ATP coupled with the translocation of calcium from the cytosol out of the cell, into the endoplasmic reticulum, or into organelles. This is Calcium-transporting ATPase 3, plasma membrane-type from Oryza sativa subsp. japonica (Rice).